The primary structure comprises 208 residues: Thymidylate kinase (208 aa).

Position 9-16 (G9–S16) interacts with ATP.

Belongs to the thymidylate kinase family.

It catalyses the reaction dTMP + ATP = dTDP + ADP. Phosphorylation of dTMP to form dTDP in both de novo and salvage pathways of dTTP synthesis. In Dehalococcoides mccartyi (strain ATCC BAA-2100 / JCM 16839 / KCTC 5957 / BAV1), this protein is Thymidylate kinase.